Consider the following 157-residue polypeptide: Large ribosomal subunit protein uL11 (157 aa).

Disordered regions lie at residues methionine 1–proline 28 and asparagine 138–lysine 157. Basic and acidic residues predominate over residues asparagine 139–lysine 157.

The protein belongs to the universal ribosomal protein uL11 family. Part of the ribosomal stalk of the 50S ribosomal subunit. Interacts with L10 and the large rRNA to form the base of the stalk. L10 forms an elongated spine to which L12 dimers bind in a sequential fashion forming a multimeric L10(L12)X complex.

In terms of biological role, forms part of the ribosomal stalk which helps the ribosome interact with GTP-bound translation factors. The chain is Large ribosomal subunit protein uL11 from Haloquadratum walsbyi (strain DSM 16790 / HBSQ001).